A 633-amino-acid chain; its full sequence is Putative oligopeptide transporter HI_0561 (633 aa).

15 helical membrane passes run 8–28, 45–65, 70–90, 128–148, 180–200, 230–250, 281–301, 311–331, 345–365, 379–399, 420–440, 483–503, 515–535, 564–584, and 604–624; these read GVTF…LKFF, SAGT…MGYW, FWQT…FTIP, IAYG…LRVM, IGIV…GVAV, IGVG…MKPM, MIYI…HFIA, ILLV…VAAA, PISG…VSIG, FLTA…CISN, VALI…LEIL, WTYI…DAFL, VIAV…VIVG, LFSA…AFII, and WDTI…VIFA.

Belongs to the oligopeptide OPT transporter family.

The protein localises to the cell membrane. The chain is Putative oligopeptide transporter HI_0561 from Haemophilus influenzae (strain ATCC 51907 / DSM 11121 / KW20 / Rd).